Reading from the N-terminus, the 125-residue chain is UPF0538 protein C2C4.04c (125 aa).

The protein belongs to the UPF0538 family.

This Schizosaccharomyces pombe (strain 972 / ATCC 24843) (Fission yeast) protein is UPF0538 protein C2C4.04c.